Consider the following 338-residue polypeptide: Patr class I histocompatibility antigen, alpha chain G (338 aa).

An N-terminal signal peptide occupies residues 1–24; the sequence is MVVMAPRTLFLLLSGALTLTETWA. Residues 25–114 form an alpha-1 region; it reads GSHSMRYFSA…LRGYYNQSEA (90 aa). Residues 25 to 308 lie on the Extracellular side of the membrane; sequence GSHSMRYFSA…KQSSLPTIPI (284 aa). A glycan (N-linked (GlcNAc...) asparagine) is linked at Asn-110. Positions 115–206 are alpha-2; that stretch reads SSHTLQWMIG…ENGKEMLQRA (92 aa). 2 disulfides stabilise this stretch: Cys-125-Cys-188 and Cys-227-Cys-283. The segment at 207–298 is alpha-3; the sequence is DPPKTHVTHH…GLPEPLMLRW (92 aa). The Ig-like C1-type domain maps to 209–299; sequence PKTHVTHHPV…LPEPLMLRWK (91 aa). The interval 299–308 is connecting peptide; the sequence is KQSSLPTIPI. The chain crosses the membrane as a helical span at residues 309 to 332; it reads MGIVAGLVVLAAVVTGAAVAAVLW. Topologically, residues 333–338 are cytoplasmic; that stretch reads RKKSSD.

The protein belongs to the MHC class I family. In terms of assembly, heterodimer of an alpha chain and a beta chain (beta-2-microglobulin). Homodimer; disulfide-linked. Binds to LILRB1 and LILRB2.

It localises to the cell membrane. Functionally, involved in the presentation of foreign antigens to the immune system. The protein is Patr class I histocompatibility antigen, alpha chain G (Patr-G) of Pan troglodytes (Chimpanzee).